Consider the following 192-residue polypeptide: Inosine triphosphate pyrophosphatase (192 aa).

An ITP-binding site is contributed by 10 to 15 (TGNANK). A Mg(2+)-binding site is contributed by Glu43. ITP-binding positions include Lys56, 74–75 (DT), Lys91, 149–152 (FGWD), Lys173, and 178–179 (HR).

The protein belongs to the HAM1 NTPase family. Homodimer. It depends on Mg(2+) as a cofactor. The cofactor is Mn(2+).

Its subcellular location is the cytoplasm. It is found in the nucleus. The catalysed reaction is ITP + H2O = IMP + diphosphate + H(+). It catalyses the reaction dITP + H2O = dIMP + diphosphate + H(+). It carries out the reaction XTP + H2O = XMP + diphosphate + H(+). Functionally, pyrophosphatase that hydrolyzes non-canonical purine nucleotides such as inosine triphosphate (ITP), deoxyinosine triphosphate (dITP) or xanthosine 5'-triphosphate (XTP) to their respective monophosphate derivatives. The enzyme does not distinguish between the deoxy- and ribose forms. Probably excludes non-canonical purines from RNA and DNA precursor pools, thus preventing their incorporation into RNA and DNA and avoiding chromosomal lesions. This Candida glabrata (strain ATCC 2001 / BCRC 20586 / JCM 3761 / NBRC 0622 / NRRL Y-65 / CBS 138) (Yeast) protein is Inosine triphosphate pyrophosphatase.